The following is a 332-amino-acid chain: 1-acyl-sn-glycerol-3-phosphate acyltransferase CHLREDRAFT_174358 (332 aa).

A helical transmembrane segment spans residues 96 to 116 (FLLSLPLFVTMMVMAPLVLAF). Positions 163–168 (HQSFLD) match the HXXXXD motif motif. The chain crosses the membrane as a helical span at residues 185–205 (TSNFLIPIIGWSMFLTGHVMI). Positions 235–238 (EGTR) match the EGTR motif motif.

Belongs to the 1-acyl-sn-glycerol-3-phosphate acyltransferase family.

The protein resides in the membrane. The catalysed reaction is a 1-acyl-sn-glycero-3-phosphate + an acyl-CoA = a 1,2-diacyl-sn-glycero-3-phosphate + CoA. It participates in phospholipid metabolism; CDP-diacylglycerol biosynthesis; CDP-diacylglycerol from sn-glycerol 3-phosphate: step 2/3. Converts lysophosphatidic acid (LPA) into phosphatidic acid by incorporating an acyl moiety at the sn-2 position of the glycerol backbone. The chain is 1-acyl-sn-glycerol-3-phosphate acyltransferase CHLREDRAFT_174358 from Chlamydomonas reinhardtii (Chlamydomonas smithii).